A 353-amino-acid polypeptide reads, in one-letter code: Photosystem II D2 protein (353 aa).

Thr-2 is modified (N-acetylthreonine). Thr-2 is subject to Phosphothreonine. A helical transmembrane segment spans residues 41 to 61 (CAYFAVGGWFTGTTFVTSWYT). His-118 is a chlorophyll a binding site. The helical transmembrane segment at 125–141 (GFMLRQFELARSVQLRP) threads the bilayer. Pheophytin a-binding residues include Gln-130 and Asn-143. Residues 153 to 166 (VFVSVFLIYPLGQS) traverse the membrane as a helical segment. Residue His-198 participates in chlorophyll a binding. A helical transmembrane segment spans residues 208-228 (AALLCAIHGATVENTLFEDGD). A plastoquinone contacts are provided by His-215 and Phe-262. His-215 is a binding site for Fe cation. His-269 contacts Fe cation. A helical transmembrane segment spans residues 279–295 (GLWMSALGVVGLALNLR).

Belongs to the reaction center PufL/M/PsbA/D family. As to quaternary structure, PSII is composed of 1 copy each of membrane proteins PsbA, PsbB, PsbC, PsbD, PsbE, PsbF, PsbH, PsbI, PsbJ, PsbK, PsbL, PsbM, PsbT, PsbX, PsbY, PsbZ, Psb30/Ycf12, at least 3 peripheral proteins of the oxygen-evolving complex and a large number of cofactors. It forms dimeric complexes. The D1/D2 heterodimer binds P680, chlorophylls that are the primary electron donor of PSII, and subsequent electron acceptors. It shares a non-heme iron and each subunit binds pheophytin, quinone, additional chlorophylls, carotenoids and lipids. There is also a Cl(-1) ion associated with D1 and D2, which is required for oxygen evolution. The PSII complex binds additional chlorophylls, carotenoids and specific lipids. serves as cofactor.

The protein resides in the plastid. The protein localises to the chloroplast thylakoid membrane. It catalyses the reaction 2 a plastoquinone + 4 hnu + 2 H2O = 2 a plastoquinol + O2. Functionally, photosystem II (PSII) is a light-driven water:plastoquinone oxidoreductase that uses light energy to abstract electrons from H(2)O, generating O(2) and a proton gradient subsequently used for ATP formation. It consists of a core antenna complex that captures photons, and an electron transfer chain that converts photonic excitation into a charge separation. The D1/D2 (PsbA/PsbD) reaction center heterodimer binds P680, the primary electron donor of PSII as well as several subsequent electron acceptors. D2 is needed for assembly of a stable PSII complex. The polypeptide is Photosystem II D2 protein (Ipomoea purpurea (Common morning glory)).